Here is a 447-residue protein sequence, read N- to C-terminus: Cytochrome P450 monooxygenase aunB (447 aa).

A heme-binding site is contributed by Cys386.

This sequence belongs to the cytochrome P450 family. It depends on heme as a cofactor.

It carries out the reaction 2 fonsecin B + NADPH + O2 + H(+) = aurasperone B + NADP(+) + 2 H2O. It catalyses the reaction 2 rubrofusarin B + NADPH + O2 + H(+) = aurasperone A + NADP(+) + 2 H2O. It participates in secondary metabolite biosynthesis. Its function is as follows. Cytochrome P450 monooxygenase; part of the gene cluster that mediates the biosynthesis of aurasperone B, a dimeric gamma-naphthopyrone. The first step in the biosynthesis of aurasperone B is the production of gamma-naphthopyrone precursor YWA1 by the non-reducing polyketide synthase albA, via condensation of one acetyl-CoA starter unit with 6 malonyl-CoA units. YWA1 is then methylated by aunE at position C-6 to yield foncesin which is further methylated at position C-8 by aunD to produce fonsecin B. A key enzyme in the biosynthetic pathway is the cytochrome P450 monooxygenase aunB which catalyzes the oxidative dimerization of fonsecin B to aurasperone B. AunB also catalyzes the oxidative dimerization of rubrofusarin B into aurasperone A. The protein is Cytochrome P450 monooxygenase aunB of Aspergillus niger (strain ATCC MYA-4892 / CBS 513.88 / FGSC A1513).